Consider the following 81-residue polypeptide: uncharacterized protein (81 aa).

An N-terminal signal peptide occupies residues 1-31 (MRYNSFLSVLALFNVLLWFTFILAISMTFSA). The chain crosses the membrane as a helical span at residues 52-74 (WFFVLLPYVIGLFFAIFDSATIG).

Its subcellular location is the membrane. This is an uncharacterized protein from Pasteurella multocida (strain Pm70).